Consider the following 490-residue polypeptide: UDP-N-acetylmuramate--L-alanine ligase (490 aa).

Position 126 to 132 (126 to 132 (GTHGKTT)) interacts with ATP.

It belongs to the MurCDEF family.

It is found in the cytoplasm. It catalyses the reaction UDP-N-acetyl-alpha-D-muramate + L-alanine + ATP = UDP-N-acetyl-alpha-D-muramoyl-L-alanine + ADP + phosphate + H(+). It functions in the pathway cell wall biogenesis; peptidoglycan biosynthesis. Its function is as follows. Cell wall formation. The polypeptide is UDP-N-acetylmuramate--L-alanine ligase (Baumannia cicadellinicola subsp. Homalodisca coagulata).